Here is a 198-residue protein sequence, read N- to C-terminus: FMN-dependent NADH:quinone oxidoreductase (198 aa).

96 to 99 (MYNF) provides a ligand contact to FMN.

Belongs to the azoreductase type 1 family. As to quaternary structure, homodimer. Requires FMN as cofactor.

It catalyses the reaction 2 a quinone + NADH + H(+) = 2 a 1,4-benzosemiquinone + NAD(+). The catalysed reaction is N,N-dimethyl-1,4-phenylenediamine + anthranilate + 2 NAD(+) = 2-(4-dimethylaminophenyl)diazenylbenzoate + 2 NADH + 2 H(+). Quinone reductase that provides resistance to thiol-specific stress caused by electrophilic quinones. Functionally, also exhibits azoreductase activity. Catalyzes the reductive cleavage of the azo bond in aromatic azo compounds to the corresponding amines. This is FMN-dependent NADH:quinone oxidoreductase from Burkholderia mallei (strain ATCC 23344).